A 157-amino-acid polypeptide reads, in one-letter code: SsrA-binding protein (157 aa).

The protein belongs to the SmpB family.

The protein localises to the cytoplasm. Required for rescue of stalled ribosomes mediated by trans-translation. Binds to transfer-messenger RNA (tmRNA), required for stable association of tmRNA with ribosomes. tmRNA and SmpB together mimic tRNA shape, replacing the anticodon stem-loop with SmpB. tmRNA is encoded by the ssrA gene; the 2 termini fold to resemble tRNA(Ala) and it encodes a 'tag peptide', a short internal open reading frame. During trans-translation Ala-aminoacylated tmRNA acts like a tRNA, entering the A-site of stalled ribosomes, displacing the stalled mRNA. The ribosome then switches to translate the ORF on the tmRNA; the nascent peptide is terminated with the 'tag peptide' encoded by the tmRNA and targeted for degradation. The ribosome is freed to recommence translation, which seems to be the essential function of trans-translation. The polypeptide is SsrA-binding protein (Methylobacterium nodulans (strain LMG 21967 / CNCM I-2342 / ORS 2060)).